The primary structure comprises 277 residues: Anamorsin homolog (277 aa).

The tract at residues 1 to 160 (MDTKRMLQNS…NIGSSFALKK (160 aa)) is N-terminal SAM-like domain. The segment at 161–188 (SIKSPVKVQNDDYSDLIDEDSLLTEEDL) is linker. 4 residues coordinate [2Fe-2S] cluster: C199, C208, C211, and C213. The interval 199 to 213 (CEVGSTRKACKNCTC) is fe-S binding site A. [4Fe-4S] cluster-binding residues include C238, C241, C249, and C252. 2 short sequence motifs (cx2C motif) span residues 238–241 (CGSC) and 249–252 (CGTC). The tract at residues 238–252 (CGSCGLGDAFRCGTC) is fe-S binding site B.

This sequence belongs to the anamorsin family. As to quaternary structure, monomer. [2Fe-2S] cluster serves as cofactor. It depends on [4Fe-4S] cluster as a cofactor.

It is found in the cytoplasm. Its subcellular location is the mitochondrion intermembrane space. Functionally, component of the cytosolic iron-sulfur (Fe-S) protein assembly (CIA) machinery. Required for the maturation of extramitochondrial Fe-S proteins. Part of an electron transfer chain functioning in an early step of cytosolic Fe-S biogenesis, facilitating the de novo assembly of a [4Fe-4S] cluster on the cytosolic Fe-S scaffold complex. Electrons are transferred from NADPH via a FAD- and FMN-containing diflavin oxidoreductase. Together with the diflavin oxidoreductase, also required for the assembly of the diferric tyrosyl radical cofactor of ribonucleotide reductase (RNR), probably by providing electrons for reduction during radical cofactor maturation in the catalytic small subunit. This is Anamorsin homolog from Populus trichocarpa (Western balsam poplar).